A 280-amino-acid polypeptide reads, in one-letter code: MTALVLDGKLCAKETENRLQAQVTELKERTGCTPILATILVGADPASATYVKMKGNACRRVGMDSMAIELPESTTTEQLLDKINELNNNPDVHGILLQHPVPAQVDERLCFDAIAAHKDVDGVTCLGFGRMAMKEPAYGAATPAGIMRLLAAYDIQLEGKHVVVVGRSPILGKPMAMMMLNANATVTMCHSRTQNLPEFVKQADVIVGAVGKPELIKADWIKDGAIVVDAGYHPGGIGDIELGPLKDRVAAYTPVPGGVGPMTINTLILQTLESGLKQLG.

Residues 166 to 168 and S191 contribute to the NADP(+) site; that span reads GRS.

It belongs to the tetrahydrofolate dehydrogenase/cyclohydrolase family. Homodimer.

It carries out the reaction (6R)-5,10-methylene-5,6,7,8-tetrahydrofolate + NADP(+) = (6R)-5,10-methenyltetrahydrofolate + NADPH. The catalysed reaction is (6R)-5,10-methenyltetrahydrofolate + H2O = (6R)-10-formyltetrahydrofolate + H(+). The protein operates within one-carbon metabolism; tetrahydrofolate interconversion. In terms of biological role, catalyzes the oxidation of 5,10-methylenetetrahydrofolate to 5,10-methenyltetrahydrofolate and then the hydrolysis of 5,10-methenyltetrahydrofolate to 10-formyltetrahydrofolate. The sequence is that of Bifunctional protein FolD from Marinomonas sp. (strain MWYL1).